We begin with the raw amino-acid sequence, 173 residues long: Adenine phosphoribosyltransferase (173 aa).

This sequence belongs to the purine/pyrimidine phosphoribosyltransferase family. Homodimer.

It localises to the cytoplasm. The catalysed reaction is AMP + diphosphate = 5-phospho-alpha-D-ribose 1-diphosphate + adenine. It participates in purine metabolism; AMP biosynthesis via salvage pathway; AMP from adenine: step 1/1. Its function is as follows. Catalyzes a salvage reaction resulting in the formation of AMP, that is energically less costly than de novo synthesis. The chain is Adenine phosphoribosyltransferase from Thermoanaerobacter pseudethanolicus (strain ATCC 33223 / 39E) (Clostridium thermohydrosulfuricum).